Consider the following 308-residue polypeptide: Rhamnose-binding lectin (308 aa).

The signal sequence occupies residues 1–23; that stretch reads MMLILKLSLLSLLIATPGLLVSG. SUEL-type lectin domains follow at residues 27–115, 123–213, and 218–308; these read ITCY…SFDC, ICEH…YICT, and VCEG…YACV. N-linked (GlcNAc...) asparagine glycosylation is present at Asn110.

Homotrimer. As to expression, expressed in eggs, but not in liver.

It is found in the secreted. Its function is as follows. Lectin that binds L-rhamnose. Also binds monosaccharides possessing steric similarity to the hydroxyl group orientation at C2 and C4 of the pyranose ring structure of L-rhamnose, such as L-mannose and L-lyxose. This is Rhamnose-binding lectin from Silurus asotus (Amur catfish).